Reading from the N-terminus, the 488-residue chain is Histone deacetylase 2 (488 aa).

The histone deacetylase stretch occupies residues K9 to D322. Residues G28 and K32 each coordinate 1D-myo-inositol 1,4,5,6-tetrakisphosphate. K75 is modified (N6-acetyllysine; alternate). Residue K75 forms a Glycyl lysine isopeptide (Lys-Gly) (interchain with G-Cter in SUMO2); alternate linkage. The active site involves H142. Ca(2+) is bound by residues D175, D177, H179, F188, T191, V194, S198, and F199. Residues D177 and H179 each contribute to the Zn(2+) site. K221 bears the N6-acetyllysine mark. A Ca(2+)-binding site is contributed by Y223. C262 bears the S-nitrosocysteine mark. D265 contacts Zn(2+). Residue R271 participates in 1D-myo-inositol 1,4,5,6-tetrakisphosphate binding. C274 carries the S-nitrosocysteine modification. The interval A389–P488 is disordered. Phosphoserine is present on residues S394, S407, S422, and S424. The span at P402 to C417 shows a compositional bias: basic and acidic residues. The span at D418–G428 shows a compositional bias: acidic residues. Residues E429–K481 are compositionally biased toward basic and acidic residues. Residues K439, K452, K458, K462, K478, and K481 each participate in a glycyl lysine isopeptide (Lys-Gly) (interchain with G-Cter in SUMO2) cross-link.

It belongs to the histone deacetylase family. HD type 1 subfamily. In terms of assembly, part of the core histone deacetylase (HDAC) complex composed of HDAC1, HDAC2, RBBP4 and RBBP7, the core complex associates with SIN3, SAP18 and SAP30 to form the SIN3 HDAC complex. Component of the nucleosome remodeling and deacetylase (NuRD) repressor complex, composed of core proteins MTA1, MTA2, MTA3, RBBP4, RBBP7, HDAC1, HDAC2, MBD2, MBD3, and peripherally associated proteins CDK2AP1, CDK2AP2, GATAD2A, GATAD2B, CHD3, CHD4 and CHD5. The exact stoichiometry of the NuRD complex is unknown, and some subunits such as MBD2 and MBD3, GATAD2A and GATAD2B, and CHD3, CHD4 and CHD5 define mutually exclusive NuRD complexes. Component of a RCOR/GFI/KDM1A/HDAC complex. Component of a BHC histone deacetylase complex that contains HDAC1, HDAC2, HMG20B, KDM1A, RCOR1 and PHF21A. The BHC complex may also contain ZMYM2, ZNF217, ZMYM3, GSE1 and GTF2I. Part of a complex containing the core histones H2A, H2B, H3 and H4, DEK and unphosphorylated DAXX. Part of a complex containing ATR and CHD4. Forms a heterologous complex at least with YY1. Interacts in the late S-phase of DNA-replication with DNMT1 in the other transcriptional repressor complex composed of DNMT1, DMAP1, PCNA, CAF1. Component of a mSin3A corepressor complex that contains SIN3A, SAP130, SUDS3, ARID4B, HDAC1 and HDAC2. Part of a complex composed of TRIM28, HDAC1, HDAC2 and EHMT2. Part of a complex containing at least CDYL, MIER1, MIER2, HDAC1 and HDAC2. Component of a histone deacetylase complex containing DNTTIP1, ZNF541, HDAC1 and HDAC2. Forms a complex comprising APPL1, RUVBL2, APPL2, CTNNB1 and HDAC1. Interacts directly with GFI1. Interacts directly with GFI1B. Interacts with APEX1; the interaction is not dependent on the acetylated status of APEX1. Interacts with ATR. Interacts with BCL6 (non-acetylated form). Interacts with BEND3. Interacts with CBFA2T3. Interacts with CDK2AP1. Interacts with CHD4. Interacts with CHD5. Interacts with CHFR. Interacts with CRY1. Interacts with DNMT1. Interacts with GATAD2A. Interacts with HCFC1. Interacts with HDAC7. Interacts with HDAC10. Interacts with INSM1. Interacts with KDM4A. Interacts with MACROH2A1 (via the non-histone region). Interacts with MBD3L2. Interacts with MTA1, with a preference for sumoylated MTA1. Interacts with NACC2. Interacts with NRIP1. Interacts with PELP1. Interacts with PIMREG. Interacts with PRDM6. Interacts with PWWP2B Interacts with SAP30. Interacts with SAP30L. Interacts with SETDB1. Interacts with SIX3. Interacts with SMARCAD1. Interacts with SNW1. Interacts with SPHK2. Interacts with SPEN/MINT. Interacts (CK2 phosphorylated form) with SP3. Interacts with SUV39H1. Interacts with TSHZ3 (via its N-terminus). Interacts with ZMYND8. Interacts with ZNF431. Interacts with ZNF263; recruited to the SIX3 promoter along with other proteins involved in chromatin modification and transcriptional corepression where it contributes to transcriptional repression. Identified in a complex with HDAC1, KCTD19, DNTTIP1 and ZNF541. Component of the SIN3B complex, which includes SIN3B, HDAC2, PHF12 and MORF4L1; interacts directly with all subunits. The cofactor is Zn(2+). It depends on Ca(2+) as a cofactor. Post-translationally, S-nitrosylated by GAPDH. In neurons, S-nitrosylation at Cys-262 and Cys-274 does not affect enzyme activity, but induces HDAC2 release from chromatin. This in turn increases acetylation of histones surrounding neurotrophin-dependent gene promoters and promotes their transcription. In embryonic cortical neurons, S-Nitrosylation regulates dendritic growth and branching.

It localises to the nucleus. The protein localises to the cytoplasm. The catalysed reaction is N(6)-acetyl-L-lysyl-[histone] + H2O = L-lysyl-[histone] + acetate. It carries out the reaction N(6)-acetyl-L-lysyl-[protein] + H2O = L-lysyl-[protein] + acetate. It catalyses the reaction N(6)-(2E)-butenoyl-L-lysyl-[protein] + H2O = (2E)-2-butenoate + L-lysyl-[protein]. The enzyme catalyses N(6)-(2-hydroxyisobutanoyl)-L-lysyl-[protein] + H2O = 2-hydroxy-2-methylpropanoate + L-lysyl-[protein]. The catalysed reaction is N(6)-[(S)-lactoyl]-L-lysyl-[protein] + H2O = (S)-lactate + L-lysyl-[protein]. Its activity is regulated as follows. Inositol tetraphosphate (1D-myo-inositol 1,4,5,6-tetrakisphosphate) may act as an intermolecular glue between HDAC2 and N-Cor repressor complex components. In terms of biological role, histone deacetylase that catalyzes the deacetylation of lysine residues on the N-terminal part of the core histones (H2A, H2B, H3 and H4). Histone deacetylation gives a tag for epigenetic repression and plays an important role in transcriptional regulation, cell cycle progression and developmental events. Histone deacetylases act via the formation of large multiprotein complexes. Forms transcriptional repressor complexes by associating with MAD, SIN3, YY1 and N-COR. Component of a RCOR/GFI/KDM1A/HDAC complex that suppresses, via histone deacetylase (HDAC) recruitment, a number of genes implicated in multilineage blood cell development. Acts as a component of the histone deacetylase NuRD complex which participates in the remodeling of chromatin. Component of the SIN3B complex that represses transcription and counteracts the histone acetyltransferase activity of EP300 through the recognition H3K27ac marks by PHF12 and the activity of the histone deacetylase HDAC2. Also deacetylates non-histone targets: deacetylates TSHZ3, thereby regulating its transcriptional repressor activity. May be involved in the transcriptional repression of circadian target genes, such as PER1, mediated by CRY1 through histone deacetylation. Involved in MTA1-mediated transcriptional corepression of TFF1 and CDKN1A. In addition to protein deacetylase activity, also acts as a protein-lysine deacylase by recognizing other acyl groups: catalyzes removal of (2E)-butenoyl (crotonyl), lactoyl (lactyl) and 2-hydroxyisobutanoyl (2-hydroxyisobutyryl) acyl groups from lysine residues, leading to protein decrotonylation, delactylation and de-2-hydroxyisobutyrylation, respectively. The protein is Histone deacetylase 2 of Mus musculus (Mouse).